We begin with the raw amino-acid sequence, 253 residues long: 5-oxoprolinase subunit A (253 aa).

It belongs to the LamB/PxpA family. In terms of assembly, forms a complex composed of PxpA, PxpB and PxpC.

It carries out the reaction 5-oxo-L-proline + ATP + 2 H2O = L-glutamate + ADP + phosphate + H(+). Functionally, catalyzes the cleavage of 5-oxoproline to form L-glutamate coupled to the hydrolysis of ATP to ADP and inorganic phosphate. The polypeptide is 5-oxoprolinase subunit A (Bacillus anthracis (strain CDC 684 / NRRL 3495)).